We begin with the raw amino-acid sequence, 787 residues long: MTRDQRVCIFGEKKSTVRSVTFKAPKSNYDLTSWRIWEQAFRLNVSNSKKCFDTISGHRITLPTNARGLFTGYDYESKRHRIVIRGYDKFFNIDEVPITTWDALSQHTKGPYELTVKENGCIIFIAALPDGQIIVSSKHSLGIVEGQSVSHANVGERWLEKHLQSVGRTKQELAHELLRRDMTAVAELCDDEFEEHILPYTGNSRGLYLHGLNRNCPQFITASSCEVAEFAEQWGFMKVSSFFMDSIHELKAFLENASKDGKWNNRAIEGFVIRCHSDHSSLEQQSSNDFFFKYKFPEPYGMFRQWREVTKMLISGKKPSYTKYKKVTAEYITFCDKKFKEDEDAKRLYMSNKGIISLRDEFLVLSKLDLMHLSVSNDNDCGKEFTLLVPIATIGCGKTTVAKILEKLFGWPVVQNDNLPSGKGGPKRFAKAIIEEFRNGHSVVFADRNNHISNMRSTLQTDILALIDGVRFVALPFKHTPEVPEFVQNRVLQRGDRHQSIKVSEGVDKVKAIMNTFYKQYKPFDPAGNKHDANYDDIIELDPLIGSLENARRIVNYFKKNIPELIPNDPSDDDYAAALNYAVNEYVPTYRKTFGNDSKKIKNKITAEGITGSSTCFKKAPRYFGVLLDRKTVESSLVQVLTIANLQWQEAFSRYTLQDSFHITMIHESQKPVNSRIWEQYLQHMHDKNTTKMGNISFRITHLVWDDRVICFRVTMNENSVWYGKTCNPQLHITLGTSSSDVKAFESNFLLKKLRWQGDEVDSTDGNVRYLTVLPKIIIEGMLEPVY.

Residue lysine 117 is the N6-AMP-lysine intermediate of the active site.

Belongs to the TRL1 family.

It localises to the cytoplasm. The catalysed reaction is ATP + (ribonucleotide)n-3'-hydroxyl + 5'-phospho-(ribonucleotide)m = (ribonucleotide)n+m + AMP + diphosphate.. In terms of biological role, required for the splicing of precursor tRNA molecules containing introns. The ligation activity requires three enzymatic activities: phosphorylation of the 5' terminus of the 3' half-tRNA in the presence of ATP, opening of the 2'3'-cyclic phosphodiester bond of the 5' half-tRNA leaving a 2'-phosphomonoester and ligation of the two tRNA halves in an ATP-dependent reaction. This is tRNA ligase 1 (trl1) from Schizosaccharomyces pombe (strain 972 / ATCC 24843) (Fission yeast).